The sequence spans 62 residues: Photosystem II reaction center protein Z (62 aa).

The next 2 membrane-spanning stretches (helical) occupy residues 8–28 (ALLLLVVMSFVLIVGVPVLYA) and 41–61 (LVGGLAWTALVVLVGVLNYFV).

The protein belongs to the PsbZ family. As to quaternary structure, PSII is composed of 1 copy each of membrane proteins PsbA, PsbB, PsbC, PsbD, PsbE, PsbF, PsbH, PsbI, PsbJ, PsbK, PsbL, PsbM, PsbT, PsbX, PsbY, PsbZ, Psb30/Ycf12, peripheral proteins PsbO, CyanoQ (PsbQ), PsbU, PsbV and a large number of cofactors. It forms dimeric complexes.

The protein localises to the cellular thylakoid membrane. Functionally, may control the interaction of photosystem II (PSII) cores with the light-harvesting antenna, regulates electron flow through the 2 photosystem reaction centers. PSII is a light-driven water plastoquinone oxidoreductase, using light energy to abstract electrons from H(2)O, generating a proton gradient subsequently used for ATP formation. This chain is Photosystem II reaction center protein Z, found in Synechococcus elongatus (strain ATCC 33912 / PCC 7942 / FACHB-805) (Anacystis nidulans R2).